The primary structure comprises 179 residues: Probable RNA 2'-phosphotransferase (179 aa).

It belongs to the KptA/TPT1 family.

Its function is as follows. Removes the 2'-phosphate from RNA via an intermediate in which the phosphate is ADP-ribosylated by NAD followed by a presumed transesterification to release the RNA and generate ADP-ribose 1''-2''-cyclic phosphate (APPR&gt;P). May function as an ADP-ribosylase. The protein is Probable RNA 2'-phosphotransferase of Fusobacterium nucleatum subsp. nucleatum (strain ATCC 25586 / DSM 15643 / BCRC 10681 / CIP 101130 / JCM 8532 / KCTC 2640 / LMG 13131 / VPI 4355).